Consider the following 585-residue polypeptide: Formate--tetrahydrofolate ligase (585 aa).

65 to 72 (TPHGEGKT) provides a ligand contact to ATP.

Belongs to the formate--tetrahydrofolate ligase family.

The catalysed reaction is (6S)-5,6,7,8-tetrahydrofolate + formate + ATP = (6R)-10-formyltetrahydrofolate + ADP + phosphate. The protein operates within one-carbon metabolism; tetrahydrofolate interconversion. In Shewanella baltica (strain OS195), this protein is Formate--tetrahydrofolate ligase.